The primary structure comprises 93 residues: MAKGQSLQDPFLNALRRERVPVSIYLVNGIKLQGQVESFDQFVILLKNTVSQMVYKHAISTVVPARPFNVNSHTAAPSPAGGFNGQQDDNNDQ.

In terms of domain architecture, Sm spans 9–68 (DPFLNALRRERVPVSIYLVNGIKLQGQVESFDQFVILLKNTVSQMVYKHAISTVVPARPF). A disordered region spans residues 70 to 93 (VNSHTAAPSPAGGFNGQQDDNNDQ).

It belongs to the Hfq family. In terms of assembly, homohexamer.

Its function is as follows. RNA chaperone that binds small regulatory RNA (sRNAs) and mRNAs to facilitate mRNA translational regulation in response to envelope stress, environmental stress and changes in metabolite concentrations. Also binds with high specificity to tRNAs. The polypeptide is RNA-binding protein Hfq (Shewanella sediminis (strain HAW-EB3)).